Here is a 344-residue protein sequence, read N- to C-terminus: Phenylalanine--tRNA ligase alpha subunit (344 aa).

Mg(2+) is bound at residue E257.

This sequence belongs to the class-II aminoacyl-tRNA synthetase family. Phe-tRNA synthetase alpha subunit type 1 subfamily. As to quaternary structure, tetramer of two alpha and two beta subunits. Mg(2+) serves as cofactor.

It is found in the cytoplasm. The enzyme catalyses tRNA(Phe) + L-phenylalanine + ATP = L-phenylalanyl-tRNA(Phe) + AMP + diphosphate + H(+). The sequence is that of Phenylalanine--tRNA ligase alpha subunit from Chlorobium chlorochromatii (strain CaD3).